The chain runs to 306 residues: Dioxygenase FrzG (306 aa).

Residues histidine 132, aspartate 134, and histidine 216 each contribute to the Fe cation site.

The protein belongs to the PhyH family. As to quaternary structure, homodimer. Fe cation serves as cofactor.

The enzyme catalyses (1S,4S)-4-[(4-methoxyphenyl)methyl]-2-methyl-2,5-diazaspiro[bicyclo[3.2.1]octane-6,1'-cyclohexan]-4'-one + 2-oxoglutarate + O2 = (2S)-3-(4-methoxyphenyl)-2-[(3S)-3-(methylamino)-8-oxo-1-azaspiro[4.5]decan-1-yl]propanal + succinate + CO2. Its pathway is secondary metabolite biosynthesis. Dioxygenase; part of the gene cluster that mediates the biosynthesis of the alkaloid (-)-FR901483, a potent immunosuppressant that shows efficacy in animal models and a probable inhibitor of purine nucleotide biosynthesis by targeting phosphoribosylpyrophosphate amidotransferase (PPAT). Within the pathway, FrzG cleaves the C9-N10' bond to yield a conjugated iminium. FrzG is also able to catalyze the dehydrogenation between C7 and C8 which leads to a shunt product. The biosynthesis of (-)-FR901483 starts with the condensation of two L-tyrosines to yield (S,S)-dityrosyl-piperazine. This process occurs in 3 steps with the non-canonical nonribosomal peptide synthetase FrzA catalyzing the reduction of L-tyrosine into L-tyrosinal, the spontaneous condensation of 2 L-tyrosinal units, and the subsequent reduction by the NmrA-like family domain-containing oxidoreductase FrzB. The cytochrome P450 monooxygenase FrzC then performs coupling between N10 and C1' to morph the piperazine into a 1,4-diazabicyclo[3.2.1]octane spiro-fused to a 2,5-cyclohexadienone. The dienone portion is further reduced to cyclohexanone by the flavin-dependent reductase FrzD. The methyltranserases (MTs) FrzE and FrzF are then involved in the methylation at the C10' amine and the C4 phenolic oxygen, respectively. The order of the two MTs appear to be interchangeable. Cleavage of the C9-N10' bond by the dioxygenase FrzG then leads to formation of a conjugated iminium. In addition to the oxidation of C9, an additional dehydrogenation between C7 and C8 can occur to give a likely shunt product. The next biosynthetic step is the intramolecular aldol condensation catalyzed by the newly identified aldolase FrzH to yield an aza-tricyclic product with the formation of a C9-C3' bond. The short-chain dehydrogenase/reductase FrzI then produces dephospho-(-)-FR901483 that is phosphorylated at C4'-OH into (-)-FR901483 by the phosphotransferase FrzJ. This is Dioxygenase FrzG from Cladobotryum sp.